Here is a 24-residue protein sequence, read N- to C-terminus: Conotoxin PIVF (24 aa).

3 disulfide bridges follow: Cys-2-Cys-10, Cys-3-Cys-15, and Cys-13-Cys-19. Lysine amide is present on Lys-24.

This sequence belongs to the conotoxin A superfamily. As to expression, expressed by the venom duct.

It is found in the secreted. Its function is as follows. Probable neurotoxin with ion channel inhibitor activity. In vivo, elicits dose-dependently excitatory activity upon injection into fish. Its action is slowly reversible. The chain is Conotoxin PIVF from Conus purpurascens (Purple cone).